A 703-amino-acid chain; its full sequence is Elongation factor G 1 (703 aa).

The region spanning 8–291 is the tr-type G domain; sequence ERYRNIGISA…AVIDYLPSPV (284 aa). GTP contacts are provided by residues 17–24, 88–92, and 142–145; these read AHIDAGKT, DTPGH, and NKMD.

This sequence belongs to the TRAFAC class translation factor GTPase superfamily. Classic translation factor GTPase family. EF-G/EF-2 subfamily.

The protein localises to the cytoplasm. Functionally, catalyzes the GTP-dependent ribosomal translocation step during translation elongation. During this step, the ribosome changes from the pre-translocational (PRE) to the post-translocational (POST) state as the newly formed A-site-bound peptidyl-tRNA and P-site-bound deacylated tRNA move to the P and E sites, respectively. Catalyzes the coordinated movement of the two tRNA molecules, the mRNA and conformational changes in the ribosome. The protein is Elongation factor G 1 of Burkholderia orbicola (strain AU 1054).